The sequence spans 858 residues: G2-specific protein kinase nim-1 (858 aa).

A Protein kinase domain is found at 7–290 (YELLEKIGHG…TATLLNLPIV (284 aa)). ATP-binding positions include 13–21 (IGHGSFGII) and lysine 36. The Proton acceptor role is filled by aspartate 161. Residue threonine 194 is modified to Phosphothreonine; by autocatalysis. Residues 291 to 383 (RLMRKEKEVV…QARVEAELQR (93 aa)) are a coiled coil. Disordered regions lie at residues 495–693 (TKAP…LPQA) and 747–858 (SAVD…LSQS). The segment covering 516-525 (SNWEVPRETE) has biased composition (basic and acidic residues). The segment covering 526–535 (MIDSGDESEA) has biased composition (acidic residues). Composition is skewed to polar residues over residues 548 to 572 (SSKN…NSNV) and 580 to 598 (SKQT…SSIG). Positions 636 to 648 (SANNINNSSNGGS) are enriched in low complexity. Polar residues predominate over residues 650-661 (APSSTVTSNITV). The span at 676–691 (SSFSQQQNNQPQQSLP) shows a compositional bias: low complexity. The segment covering 760–780 (GQSQLPTRPRSQPQPITANFE) has biased composition (polar residues). Residues 781 to 802 (QQQQQQQSNTNSISSSNSAGSG) are compositionally biased toward low complexity.

The protein belongs to the protein kinase superfamily. CAMK Ser/Thr protein kinase family.

The protein resides in the nucleus. It catalyses the reaction L-seryl-[protein] + ATP = O-phospho-L-seryl-[protein] + ADP + H(+). The catalysed reaction is L-threonyl-[protein] + ATP = O-phospho-L-threonyl-[protein] + ADP + H(+). Its function is as follows. Protein kinase that plays an important role in mitotic regulation. This chain is G2-specific protein kinase nim-1 (nim-1), found in Neurospora crassa (strain ATCC 24698 / 74-OR23-1A / CBS 708.71 / DSM 1257 / FGSC 987).